The chain runs to 426 residues: D-tagatose-1,6-bisphosphate aldolase subunit KbaZ (426 aa).

Belongs to the GatZ/KbaZ family. KbaZ subfamily. As to quaternary structure, forms a complex with KbaY.

Its pathway is carbohydrate metabolism; D-tagatose 6-phosphate degradation; D-glyceraldehyde 3-phosphate and glycerone phosphate from D-tagatose 6-phosphate: step 2/2. Component of the tagatose-1,6-bisphosphate aldolase KbaYZ that is required for full activity and stability of the Y subunit. Could have a chaperone-like function for the proper and stable folding of KbaY. When expressed alone, KbaZ does not show any aldolase activity. The polypeptide is D-tagatose-1,6-bisphosphate aldolase subunit KbaZ (Escherichia coli (strain 55989 / EAEC)).